The following is a 178-amino-acid chain: Large ribosomal subunit protein bL35m (178 aa).

Belongs to the bacterial ribosomal protein bL35 family.

The protein resides in the mitochondrion. The polypeptide is Large ribosomal subunit protein bL35m (mRpL35) (Drosophila melanogaster (Fruit fly)).